The chain runs to 298 residues: 4-hydroxy-tetrahydrodipicolinate synthase (298 aa).

Threonine 51 contacts pyruvate. Tyrosine 139 serves as the catalytic Proton donor/acceptor. Lysine 167 acts as the Schiff-base intermediate with substrate in catalysis. Isoleucine 209 contributes to the pyruvate binding site.

Belongs to the DapA family. In terms of assembly, homotetramer; dimer of dimers.

Its subcellular location is the cytoplasm. It catalyses the reaction L-aspartate 4-semialdehyde + pyruvate = (2S,4S)-4-hydroxy-2,3,4,5-tetrahydrodipicolinate + H2O + H(+). Its pathway is amino-acid biosynthesis; L-lysine biosynthesis via DAP pathway; (S)-tetrahydrodipicolinate from L-aspartate: step 3/4. Catalyzes the condensation of (S)-aspartate-beta-semialdehyde [(S)-ASA] and pyruvate to 4-hydroxy-tetrahydrodipicolinate (HTPA). This is 4-hydroxy-tetrahydrodipicolinate synthase from Pasteurella multocida (strain Pm70).